Consider the following 301-residue polypeptide: MSKQGFKNVPMAPALTWPERLGQYWKLVRGDRPIGSLLLLWPTWWALWLAAGGLPPLWTLFVFTAGVWLTRSAGCVINDYADRWLDPHVERTKSRPLATGAVSGREALWVFVVLMLVAFALVLSLNWLTVALSVPGLFLAASYPYLKRHTHLPQVYLGMAFGWGIPMGFAAVQGSVPLLAWLLYAANILWATAYDTWYAMVDREDDLRMGSKSTAILFGRYDLIAQGVLYALMFAALVLVGLRAGLSIAYWAGLGIAALLVAYEFHIARHRERGPCFRAFLHNNWVGLAIFVGIAASLALR.

Transmembrane regions (helical) follow at residues 34–54, 57–77, 108–128, 163–183, 222–242, 248–268, and 280–300; these read IGSL…AGGL, LWTL…GCVI, LWVF…LNWL, WGIP…AWLL, DLIA…LVGL, IAYW…FHIA, and FLHN…SLAL.

Belongs to the UbiA prenyltransferase family. It depends on Mg(2+) as a cofactor.

Its subcellular location is the cell inner membrane. The enzyme catalyses all-trans-octaprenyl diphosphate + 4-hydroxybenzoate = 4-hydroxy-3-(all-trans-octaprenyl)benzoate + diphosphate. It participates in cofactor biosynthesis; ubiquinone biosynthesis. In terms of biological role, catalyzes the prenylation of para-hydroxybenzoate (PHB) with an all-trans polyprenyl group. Mediates the second step in the final reaction sequence of ubiquinone-8 (UQ-8) biosynthesis, which is the condensation of the polyisoprenoid side chain with PHB, generating the first membrane-bound Q intermediate 3-octaprenyl-4-hydroxybenzoate. The polypeptide is 4-hydroxybenzoate octaprenyltransferase (Xanthomonas campestris pv. campestris (strain 8004)).